We begin with the raw amino-acid sequence, 220 residues long: Carbonic anhydrase (220 aa).

Zn(2+) contacts are provided by Cys-39, Asp-41, His-98, and Cys-101.

It belongs to the beta-class carbonic anhydrase family. Zn(2+) is required as a cofactor.

It catalyses the reaction hydrogencarbonate + H(+) = CO2 + H2O. The polypeptide is Carbonic anhydrase (cynT) (Pseudomonas aeruginosa (strain ATCC 15692 / DSM 22644 / CIP 104116 / JCM 14847 / LMG 12228 / 1C / PRS 101 / PAO1)).